A 418-amino-acid chain; its full sequence is Tyrosine--tRNA ligase (418 aa).

L-tyrosine is bound at residue Tyr-38. The 'HIGH' region signature appears at 43–52; the sequence is CTAKSLHVGS. Positions 175 and 179 each coordinate L-tyrosine. Positions 235–239 match the 'KMSKS' region motif; that stretch reads KMGKT. Position 238 (Lys-238) interacts with ATP. The S4 RNA-binding domain occupies 348-413; that stretch reads LPIIKLLQIS…CGKKRHLKIM (66 aa).

It belongs to the class-I aminoacyl-tRNA synthetase family. TyrS type 1 subfamily. Homodimer.

The protein resides in the cytoplasm. It carries out the reaction tRNA(Tyr) + L-tyrosine + ATP = L-tyrosyl-tRNA(Tyr) + AMP + diphosphate + H(+). In terms of biological role, catalyzes the attachment of tyrosine to tRNA(Tyr) in a two-step reaction: tyrosine is first activated by ATP to form Tyr-AMP and then transferred to the acceptor end of tRNA(Tyr). The chain is Tyrosine--tRNA ligase from Ehrlichia canis (strain Jake).